Here is a 204-residue protein sequence, read N- to C-terminus: MMRTLITTHPLLLLLLLQQLLQPVQLQEVDTDFDSPDDEMEELEEYLEEFQSRGPTRPPTKENVERRVIIEPGMPLYDRDYCNEEIKRKNVYHKYRCVTEHYFLLMQYDELQKICYNRFVPCKNGVRKCNRSKGLVEGVYCNLTEALEIPGCEYKSFYRTGYVLITCAWQNEIHKLIPHTINDLVEPPKHRSFLNEDGVFVIPP.

A signal peptide spans 1-26 (MMRTLITTHPLLLLLLLQQLLQPVQL). 3 disulfide bridges follow: C97-C152, C115-C167, and C122-C129. N-linked (GlcNAc...) asparagine glycans are attached at residues N130 and N142.

This sequence belongs to the pancreatic ribonuclease family.

The protein resides in the secreted. In terms of biological role, does not exhibit any ribonuclease activity. This Chlorocebus pygerythrus (Vervet monkey) protein is Inactive ribonuclease-like protein 9 (RNASE9).